We begin with the raw amino-acid sequence, 346 residues long: B3 domain-containing protein At5g60142 (346 aa).

A DNA-binding region (TF-B3) is located at residues 13-109 (PKFFKVYLPD…CFNFCIYGRA (97 aa)). Disordered regions lie at residues 158 to 179 (QDYN…ADND) and 192 to 243 (TSSE…HDRQ). Over residues 192–217 (TSSEDIIVIDDDDDDDDQDYGDDDHA) the composition is skewed to acidic residues. The segment covering 218–229 (DVEKERWRGVKT) has biased composition (basic and acidic residues).

It is found in the nucleus. The protein is B3 domain-containing protein At5g60142 of Arabidopsis thaliana (Mouse-ear cress).